The chain runs to 216 residues: Ephrin-A1 (216 aa).

Positions 1-28 (MMELYRAAVQLIVGVGLGVGLWLREAQG) are cleaved as a signal peptide. Residues 29 to 161 (ERHIVFWNSS…RLRVHVSGRT (133 aa)) form the Ephrin RBD domain. Asn-36 carries N-linked (GlcNAc...) asparagine glycosylation. Cys-61 and Cys-102 are oxidised to a cystine. The segment at 162–181 (TPPPVNVHTPRSHIQSDEPE) is disordered. Ser-195 carries GPI-anchor amidated serine lipidation. Positions 196–216 (AAPGTPCTLYGLLLAALLLRL) are cleaved as a propeptide — removed in mature form.

The protein belongs to the ephrin family. As to quaternary structure, binds to the receptor tyrosine kinases EPHA2, EPHA4, EPHA5, EPHA6 and EPHA7. Also binds with low affinity to EPHA1.

The protein resides in the membrane. Functionally, cell surface GPI-bound ligand for Eph receptors, a family of receptor tyrosine kinases which are crucial for migration, repulsion and adhesion during neuronal, vascular and epithelial development. Binds promiscuously Eph receptors residing on adjacent cells, leading to contact-dependent bidirectional signaling into neighboring cells. This is Ephrin-A1 (efna1) from Xenopus laevis (African clawed frog).